Here is a 168-residue protein sequence, read N- to C-terminus: Cofilin-1-B (168 aa).

Alanine 2 carries the N-acetylalanine modification. Positions 4–153 (GVMVSDDVVK…NDPCNLADKL (150 aa)) constitute an ADF-H domain. The Nuclear localization signal motif lies at 30–34 (KKRKK).

It belongs to the actin-binding proteins ADF family. Post-translationally, inactive when phosphorylated. Phosphorylation levels vary during development. Oocytes contain only the phosphorylated form, and 80-95% of cfl1 protein is phosphorylated in unfertilized eggs. Rapid dephosphorylation occurs within 30 minutes after fertilization. Phosphorylation levels increase again between the morula and blastula stages (5-8 hpf) and then decrease again as gastrulation approaches. Dephosphorylated by pdxp. As to expression, expressed diffusely in both animal and vegetal hemispheres of the oocyte. During cleavage, expression accumulates around the cleavage furrow, along the vegetal membrane, and later in the midbody. Strongly expressed in the animal hemisphere during blastula stages, with most cells showing expression by gastrulation. By stage 17, expression is highest in cells of the developing neuroectoderm, and at stage 24 the notochord, neural tube, neural crest, somites and some cells of the archenteron show high expression. By stage 35, expression has declined in the notochord, but remains in the neural tube, epidermis and a layer of cells in the archenteron. Also highly expressed in the retina and neuronal cell bodies at the base of the cement gland but not the cement gland itself. At stage 38, expression is widespread, being highest in the nervous system and retina. In the adult, expression is high in the brain, heart, oocyte, stomach, and low in skeletal muscle.

The protein resides in the nucleus matrix. The protein localises to the cytoplasm. Its subcellular location is the cytoskeleton. It localises to the cell cortex. It is found in the membrane. Functionally, may play a role in the regulation of cell morphology and cytoskeletal organization. Binds to F-actin and exhibits pH-sensitive F-actin depolymerizing activity. Required for formation of the cleavage furrow during cytokinesis. The sequence is that of Cofilin-1-B (cfl1-b) from Xenopus laevis (African clawed frog).